The chain runs to 953 residues: Vacuolar membrane protease (953 aa).

The Cytoplasmic segment spans residues 1 to 16; sequence MDQTKPPRRNPLAFTP. The helical transmembrane segment at 17–37 threads the bilayer; that stretch reads WPVTLITAVVYLAFVIPLLVI. The Vacuolar portion of the chain corresponds to 38–382; that stretch reads HHVVPSAPTS…TFVLFRLHTL (345 aa). N-linked (GlcNAc...) asparagine glycans are attached at residues Asn53 and Asn115. Zn(2+) contacts are provided by His165 and Asp177. Glu211 functions as the Proton acceptor in the catalytic mechanism. 3 residues coordinate Zn(2+): Glu212, Glu237, and His310. The chain crosses the membrane as a helical span at residues 383–403; sequence FALSVTLLVVAPIVLLLTSII. Topologically, residues 404–437 are cytoplasmic; sequence LTKVDKMYLFRTSIRPEGSLEVLPLYGDRGVIRY. The chain crosses the membrane as a helical span at residues 438–458; sequence PFLLGIPTAVTIGLAYLLTKF. Over 459-464 the chain is Vacuolar; it reads NPYIVH. Residues 465–485 form a helical membrane-spanning segment; it reads SSQYAVWSMMVSVWIFLAWFV. Residues 486-499 lie on the Cytoplasmic side of the membrane; that stretch reads SRVADFARPSAFHR. A helical transmembrane segment spans residues 500–520; sequence VYTLTWTFVVMWVLQVIATVY. Topologically, residues 521 to 524 are vacuolar; the sequence is QDRW. The chain crosses the membrane as a helical span at residues 525 to 545; sequence ALGGSYFIFFAYAGTFLATWI. The Cytoplasmic portion of the chain corresponds to 546 to 650; it reads SYLELFALPR…SLPKWLWLLQ (105 aa). The segment at 570-599 is disordered; that stretch reads ASSHSSRRGLSEEDEEDEDEAPTESTSLLG. Over residues 581 to 591 the composition is skewed to acidic residues; it reads EEDEEDEDEAP. The chain crosses the membrane as a helical span at residues 651-671; it reads FLLAAPIVLILVGPIALLLTG. The Vacuolar segment spans residues 672–684; sequence SLHQTGQDGSSSL. Residues 685–705 form a helical membrane-spanning segment; the sequence is FIYIAIVALTTLLLSPMLPFV. Residues 706–711 lie on the Cytoplasmic side of the membrane; sequence HRCTYH. Residues 712–732 form a helical membrane-spanning segment; sequence IPLFMLAVFAGTLIYNLVAFP. Topologically, residues 733–953 are vacuolar; it reads FSDSNRLKLF…VEGRKSFEIA (221 aa). Asn779 carries N-linked (GlcNAc...) asparagine glycosylation.

It belongs to the peptidase M28 family. Zn(2+) is required as a cofactor.

The protein localises to the vacuole membrane. May be involved in vacuolar sorting and osmoregulation. The protein is Vacuolar membrane protease of Emericella nidulans (strain FGSC A4 / ATCC 38163 / CBS 112.46 / NRRL 194 / M139) (Aspergillus nidulans).